We begin with the raw amino-acid sequence, 390 residues long: Odorant receptor 85b (390 aa).

Residues 1 to 30 (MEKLMKYASFFYTAVGIRPYTNGEESKMNK) are Cytoplasmic-facing. Residues 31–51 (LIFHIVFWSNVINLSFVGLFE) traverse the membrane as a helical segment. The Extracellular segment spans residues 52 to 66 (SIYVYSAFMDNKFLE). Residues 67 to 87 (AVTALSYIGFVTVGMSKMFFI) traverse the membrane as a helical segment. The Cytoplasmic portion of the chain corresponds to 88-126 (RWKKTAITELINELKEIYPNGLIREERYNLPMYLGTCSR). The chain crosses the membrane as a helical span at residues 127 to 147 (ISLIYSLLYSVLIWTFNLFCV). Residues 148-200 (MEYWVYDKWLNIRVVGKQLPYLMYIPWKWQDNWSYYPLLFSQNFAGYTSAAGQ) lie on the Extracellular side of the membrane. N-linked (GlcNAc...) asparagine glycosylation occurs at Asn-179. The chain crosses the membrane as a helical span at residues 201 to 221 (ISTDVLLCAVATQLVMHFDFL). At 222–260 (SNSMERHELSGDWKKDSRFLVDIVRYHERILRLSDAVND) the chain is on the cytoplasmic side. The helical transmembrane segment at 261-281 (IFGIPLLLNFMVSSFVICFVG) threads the bilayer. Residues 282–291 (FQMTVGVPPD) lie on the Extracellular side of the membrane. The helical transmembrane segment at 292-312 (IVVKLFLFLVSSMSQVYLICH) threads the bilayer. The Cytoplasmic portion of the chain corresponds to 313 to 360 (YGQLVADASYGFSVATYNQKWYKADVRYKRALVIIIARSQKVTFLKAT). A helical transmembrane segment spans residues 361-381 (IFLDITRSTMTDLLQISYKFF). At 382 to 390 (ALLRTMYTQ) the chain is on the extracellular side.

Belongs to the insect chemoreceptor superfamily. Heteromeric odorant receptor channel (TC 1.A.69) family. Or49a subfamily. As to quaternary structure, interacts with Orco. Complexes exist early in the endomembrane system in olfactory sensory neurons (OSNs), coupling these complexes to the conserved ciliary trafficking pathway. Expressed in olfactory sensory neurons in the antenna.

It is found in the cell membrane. In terms of biological role, odorant receptor which mediates acceptance or avoidance behavior, depending on its substrates. The odorant receptor repertoire encodes a large collection of odor stimuli that vary widely in identity, intensity, and duration. Forms a complex with Orco to form odorant-sensing units, providing sensitive and prolonged odorant signaling and calcium permeability. Involved in the behavioral responses to 2-heptanone, amyl acetate, and butyl acetate. This chain is Odorant receptor 85b (Or85b), found in Drosophila melanogaster (Fruit fly).